Reading from the N-terminus, the 126-residue chain is Fatty acid-binding protein 2, liver (126 aa).

Cholate is bound by residues 54–56 (TPN), 99–101 (HIQ), and Arg-121.

It belongs to the calycin superfamily. Fatty-acid binding protein (FABP) family.

The protein localises to the cytoplasm. In terms of biological role, binds free fatty acids and their coenzyme A derivatives, bilirubin, and some other small molecules in the cytoplasm. May be involved in intracellular lipid transport. The specificity of axolotl L-FABP differs from that of LB-FABP. Binds 2 ligands per protein molecule. The polypeptide is Fatty acid-binding protein 2, liver (Ambystoma mexicanum (Axolotl)).